The primary structure comprises 178 residues: MSRIGKQPIAIPAGVEVKLEGNLLKFKKGNLAKELDTKANVNVEIKDNNILFSPKGEDRQSRAYWGTYRALAYNIVVGLTQGFSKTLEINGVGYKAALKGKVLELSLGFSHPINYDIPEGIEIVVDKNTIAVKGSDKQVVGQVAAQIREFRPPEPYKGKGVKYSDERIIRKAGKTSKK.

Belongs to the universal ribosomal protein uL6 family. As to quaternary structure, part of the 50S ribosomal subunit.

In terms of biological role, this protein binds to the 23S rRNA, and is important in its secondary structure. It is located near the subunit interface in the base of the L7/L12 stalk, and near the tRNA binding site of the peptidyltransferase center. This is Large ribosomal subunit protein uL6 from Campylobacter jejuni subsp. jejuni serotype O:2 (strain ATCC 700819 / NCTC 11168).